Consider the following 193-residue polypeptide: uncharacterized protein (193 aa).

Residue arginine 8 coordinates substrate. Residue histidine 9 is the Tele-phosphohistidine intermediate of the active site. Asparagine 15, glutamine 21, and arginine 58 together coordinate substrate. Catalysis depends on glutamate 82, which acts as the Proton donor/acceptor. Histidine 139 contacts substrate.

This sequence belongs to the phosphoglycerate mutase family. GpmB subfamily.

Phosphatase with broad substrate specificity. Does not have phosphoglycerate mutase activity. This is an uncharacterized protein from Bacillus subtilis (strain 168).